A 253-amino-acid chain; its full sequence is uncharacterized protein (253 aa).

The signal sequence occupies residues 1-19 (MHYLKKVTIYISLLILVSG). C20 is lipidated: N-palmitoyl cysteine. A lipid anchor (S-diacylglycerol cysteine) is attached at C20.

Belongs to the staphylococcal tandem lipoprotein family.

It localises to the cell membrane. This is an uncharacterized protein from Staphylococcus epidermidis (strain ATCC 35984 / DSM 28319 / BCRC 17069 / CCUG 31568 / BM 3577 / RP62A).